A 90-amino-acid chain; its full sequence is Acylphosphatase (90 aa).

An Acylphosphatase-like domain is found at 4-90 (RMYVKVYGIV…KGEFNNFDTY (87 aa)). Catalysis depends on residues R19 and N37.

This sequence belongs to the acylphosphatase family.

It catalyses the reaction an acyl phosphate + H2O = a carboxylate + phosphate + H(+). In Sulfurisphaera tokodaii (strain DSM 16993 / JCM 10545 / NBRC 100140 / 7) (Sulfolobus tokodaii), this protein is Acylphosphatase (acyP).